The primary structure comprises 249 residues: tRNA (guanine-N(7)-)-methyltransferase (249 aa).

The disordered stretch occupies residues 1–24; it reads MHSIPADTGHTPSRAPAGNGSPPA. Residues E81, E106, D133, and D156 each contribute to the S-adenosyl-L-methionine site. D156 is an active-site residue. A substrate-binding site is contributed by K160. Residues 162–167 form an interaction with RNA region; it reads RHNKRR. Residues D192 and 227 to 230 contribute to the substrate site; that span reads TKFE.

This sequence belongs to the class I-like SAM-binding methyltransferase superfamily. TrmB family.

It carries out the reaction guanosine(46) in tRNA + S-adenosyl-L-methionine = N(7)-methylguanosine(46) in tRNA + S-adenosyl-L-homocysteine. Its pathway is tRNA modification; N(7)-methylguanine-tRNA biosynthesis. Catalyzes the formation of N(7)-methylguanine at position 46 (m7G46) in tRNA. The protein is tRNA (guanine-N(7)-)-methyltransferase of Paracidovorax citrulli (strain AAC00-1) (Acidovorax citrulli).